Reading from the N-terminus, the 210-residue chain is Protein-L-isoaspartate O-methyltransferase (210 aa).

Serine 59 is an active-site residue.

This sequence belongs to the methyltransferase superfamily. L-isoaspartyl/D-aspartyl protein methyltransferase family.

Its subcellular location is the cytoplasm. The catalysed reaction is [protein]-L-isoaspartate + S-adenosyl-L-methionine = [protein]-L-isoaspartate alpha-methyl ester + S-adenosyl-L-homocysteine. In terms of biological role, catalyzes the methyl esterification of L-isoaspartyl residues in peptides and proteins that result from spontaneous decomposition of normal L-aspartyl and L-asparaginyl residues. It plays a role in the repair and/or degradation of damaged proteins. The protein is Protein-L-isoaspartate O-methyltransferase of Nitratidesulfovibrio vulgaris (strain ATCC 29579 / DSM 644 / CCUG 34227 / NCIMB 8303 / VKM B-1760 / Hildenborough) (Desulfovibrio vulgaris).